Consider the following 358-residue polypeptide: Dihydroorotate dehydrogenase (quinone) (358 aa).

FMN is bound by residues 61–65 and Gly-85; that span reads AGFDK. Residue Lys-65 coordinates substrate. Position 110-114 (110-114) interacts with substrate; the sequence is NRFGL. Positions 139 and 170 each coordinate FMN. Asn-170 lines the substrate pocket. The active-site Nucleophile is Ser-173. Asn-175 serves as a coordination point for substrate. Residues Lys-211 and Ser-239 each coordinate FMN. A substrate-binding site is contributed by 240–241; that stretch reads NT. Residues Gly-263, Gly-292, and 313 to 314 each bind FMN; that span reads YS.

Belongs to the dihydroorotate dehydrogenase family. Type 2 subfamily. As to quaternary structure, monomer. FMN serves as cofactor.

The protein resides in the cell membrane. It catalyses the reaction (S)-dihydroorotate + a quinone = orotate + a quinol. Its pathway is pyrimidine metabolism; UMP biosynthesis via de novo pathway; orotate from (S)-dihydroorotate (quinone route): step 1/1. Its function is as follows. Catalyzes the conversion of dihydroorotate to orotate with quinone as electron acceptor. In Methylorubrum extorquens (strain CM4 / NCIMB 13688) (Methylobacterium extorquens), this protein is Dihydroorotate dehydrogenase (quinone).